The sequence spans 728 residues: Glutamate--cysteine ligase (728 aa).

A disordered region spans residues 517–552 (PVRTTRRGGSASRSASGTSTPNSGSSRPATPPLGPV). Residues 523–536 (RGGSASRSASGTST) show a composition bias toward low complexity.

The protein belongs to the glutamate--cysteine ligase type 3 family.

The catalysed reaction is L-cysteine + L-glutamate + ATP = gamma-L-glutamyl-L-cysteine + ADP + phosphate + H(+). Its pathway is sulfur metabolism; glutathione biosynthesis; glutathione from L-cysteine and L-glutamate: step 1/2. This is Glutamate--cysteine ligase (gcs-1) from Neurospora crassa (strain ATCC 24698 / 74-OR23-1A / CBS 708.71 / DSM 1257 / FGSC 987).